A 232-amino-acid chain; its full sequence is Protein INAPERTURATE POLLEN 1 homolog (232 aa).

Interacts with LECRKS7/DAF1.

It localises to the cytoplasm. In terms of biological role, required for pollen aperture formation, male fertility and LECRKS7/DAF1 function. Seems to be involved in operculum protrusion. Participates in the modification of plasma membrane at future aperture sites, possibly by creating close contact between the plasma membrane and callose wall to prevent primexine formation and sporopollenin deposition. The sequence is that of Protein INAPERTURATE POLLEN 1 homolog from Oryza sativa subsp. japonica (Rice).